The primary structure comprises 325 residues: Chain length determinant protein (325 aa).

The Cytoplasmic segment spans residues 1–31 (MRVENNNVSGQNHDPEQIDLIDLLVQLWRGK). Residues 32-52 (MTIIISVIVAIALAIGYLAVA) traverse the membrane as a helical segment. Topologically, residues 53–294 (KEKWTSTAII…LPIRRDSPKK (242 aa)) are periplasmic. A helical transmembrane segment spans residues 295–315 (AITLILAVLLGGMVGAGIVLG). At 316 to 325 (RNALRNYNAK) the chain is on the cytoplasmic side.

It belongs to the WzzB/Cld/Rol family.

The protein resides in the cell inner membrane. It functions in the pathway bacterial outer membrane biogenesis; lipopolysaccharide biosynthesis. Its function is as follows. Confers a modal distribution of chain length on the O-antigen component of lipopolysaccharide (LPS). Gives rise to a reduced number of short chain molecules and increases in numbers of longer molecules. The protein is Chain length determinant protein (wzzB) of Shigella flexneri.